A 370-amino-acid polypeptide reads, in one-letter code: Tryptophan--tRNA ligase (370 aa).

A 'HIGH' region motif is present at residues 75–83; the sequence is PSGKMHFGH. The 'KMSKS' region signature appears at 255–259; it reads KMSSS.

Belongs to the class-I aminoacyl-tRNA synthetase family.

Its subcellular location is the cytoplasm. It carries out the reaction tRNA(Trp) + L-tryptophan + ATP = L-tryptophyl-tRNA(Trp) + AMP + diphosphate + H(+). The protein is Tryptophan--tRNA ligase of Methanocaldococcus jannaschii (strain ATCC 43067 / DSM 2661 / JAL-1 / JCM 10045 / NBRC 100440) (Methanococcus jannaschii).